A 267-amino-acid chain; its full sequence is Small ribosomal subunit protein uS5 (267 aa).

The disordered stretch occupies residues 1–37 (MADEAPARSGFRGGFGSRGGRGGRGRGRGRWARGRGK). The segment covering 11–20 (FRGGFGSRGG) has biased composition (gly residues). The span at 21–34 (RGGRGRGRGRWARG) shows a compositional bias: basic residues. S60 carries the phosphoserine modification. The S5 DRBM domain occupies 85–148 (LKDEVLKIMP…ILAKLSVVPV (64 aa)).

Belongs to the universal ribosomal protein uS5 family.

In terms of biological role, component of the ribosome, a large ribonucleoprotein complex responsible for the synthesis of proteins in the cell. The small ribosomal subunit (SSU) binds messenger RNAs (mRNAs) and translates the encoded message by selecting cognate aminoacyl-transfer RNA (tRNA) molecules. The large subunit (LSU) contains the ribosomal catalytic site termed the peptidyl transferase center (PTC), which catalyzes the formation of peptide bonds, thereby polymerizing the amino acids delivered by tRNAs into a polypeptide chain. The nascent polypeptides leave the ribosome through a tunnel in the LSU and interact with protein factors that function in enzymatic processing, targeting, and the membrane insertion of nascent chains at the exit of the ribosomal tunnel. Plays a role in the assembly and function of the 40S ribosomal subunit. Mutations in this protein affects the control of translational fidelity. Involved in nucleolar processing of pre-18S ribosomal RNA and ribosome assembly. Has a specific developmental role during oogenesis. This is Small ribosomal subunit protein uS5 (RpS2) from Drosophila melanogaster (Fruit fly).